We begin with the raw amino-acid sequence, 121 residues long: Acidic phospholipase A2 PLA-1 (121 aa).

7 disulfides stabilise this stretch: C26-C115, C28-C44, C43-C95, C49-C121, C50-C88, C57-C81, and C75-C86. Positions 27, 29, and 31 each coordinate Ca(2+). Residue H47 is part of the active site. D48 contributes to the Ca(2+) binding site. Residue D89 is part of the active site.

This sequence belongs to the phospholipase A2 family. Group II subfamily. D49 sub-subfamily. Ca(2+) is required as a cofactor. Expressed by the venom gland.

It is found in the secreted. It catalyses the reaction a 1,2-diacyl-sn-glycero-3-phosphocholine + H2O = a 1-acyl-sn-glycero-3-phosphocholine + a fatty acid + H(+). Functionally, PLA2 catalyzes the calcium-dependent hydrolysis of the 2-acyl groups in 3-sn-phosphoglycerides. In Eristicophis macmahoni (Leaf-nosed viper), this protein is Acidic phospholipase A2 PLA-1.